A 275-amino-acid chain; its full sequence is MELWFTEKQTKHFGITARINRTLHTEQTEFQKLDMVETEEFGNMLILDGMVMTTEKDEFVYHEMVAHVPLFTHPNPENVLVVGGGDGGVIREVLKHPSVKKATLVEIDGKVIEYSKQYLPSIAGALDDERVEVKVGDGFLHIAESENEYDVIMVDSTEPVGPAVNLFTKGFYAGISKALKEDGIFVAQTDNPWFTPELITTVFKDVKEIFPITRLYTANIPTYPSGLWTFTIGSKKHDPLEVSEERFHEIETKYYTKELHNAAFALPKFVGDLIK.

In terms of domain architecture, PABS spans 2–235; the sequence is ELWFTEKQTK…GLWTFTIGSK (234 aa). Gln31 is an S-methyl-5'-thioadenosine binding site. Spermidine-binding residues include His62 and Asp86. S-methyl-5'-thioadenosine contacts are provided by residues Glu106 and 137–138; that span reads DG. The active-site Proton acceptor is Asp155. Spermidine is bound at residue 155–158; that stretch reads DSTE. Residue Pro162 participates in S-methyl-5'-thioadenosine binding.

This sequence belongs to the spermidine/spermine synthase family. In terms of assembly, homodimer or homotetramer.

The protein localises to the cytoplasm. The enzyme catalyses S-adenosyl 3-(methylsulfanyl)propylamine + putrescine = S-methyl-5'-thioadenosine + spermidine + H(+). It functions in the pathway amine and polyamine biosynthesis; spermidine biosynthesis; spermidine from putrescine: step 1/1. Catalyzes the irreversible transfer of a propylamine group from the amino donor S-adenosylmethioninamine (decarboxy-AdoMet) to putrescine (1,4-diaminobutane) to yield spermidine. The chain is Polyamine aminopropyltransferase from Bacillus mycoides (strain KBAB4) (Bacillus weihenstephanensis).